A 508-amino-acid polypeptide reads, in one-letter code: Phenylalanine--tRNA ligase alpha subunit (508 aa).

Alanine 2 carries the N-acetylalanine modification. Phosphoserine is present on residues serine 193 and serine 301. Lysine 311 carries the post-translational modification N6-acetyllysine. L-phenylalanine contacts are provided by residues threonine 329, 372-374, and tyrosine 412; that span reads QIE. Residue glutamate 414 coordinates Mg(2+). Phenylalanine 438 lines the L-phenylalanine pocket.

The protein belongs to the class-II aminoacyl-tRNA synthetase family. Phe-tRNA synthetase alpha subunit type 2 subfamily. Heterotetramer; dimer of two heterodimers formed by FARSA and FARSB. Mg(2+) is required as a cofactor.

Its subcellular location is the cytoplasm. It catalyses the reaction tRNA(Phe) + L-phenylalanine + ATP = L-phenylalanyl-tRNA(Phe) + AMP + diphosphate + H(+). This chain is Phenylalanine--tRNA ligase alpha subunit (Farsa), found in Rattus norvegicus (Rat).